We begin with the raw amino-acid sequence, 105 residues long: Secreted effector protein PINE1 (105 aa).

The signal sequence occupies residues 1-21 (MKLSQPLSIFAILAASTVAVA).

As to quaternary structure, interacts with Arabidopsis thaliana PGIP1.

The protein resides in the secreted. Its function is as follows. Effector protein required for full virulence. Directly interacts with and functionally inactivates PG-inhibiting proteins (PGIPs). PGIPs are a defense mechanism of infected plants, that inhibit the plant pathogens secreted polygalacturonases (PGs) used to degrade the plant cell wall. Excerts its function by interacting with host PGIPs to negate their polygalacturonase-inhibiting function via enhanced dissociation of PGIPs from PGs. The protein is Secreted effector protein PINE1 of Sclerotinia sclerotiorum (strain ATCC 18683 / 1980 / Ss-1) (White mold).